Here is an 896-residue protein sequence, read N- to C-terminus: UPF0182 protein GM21_2279 (896 aa).

7 helical membrane-spanning segments follow: residues 6–26, 46–66, 99–119, 158–180, 201–221, 245–265, and 271–291; these read MTFI…LLSF, VYAQ…FLQL, LVRP…GNWG, LLKS…AYYV, LAVL…LESF, TLRI…LGIW, and LALG…RVYP.

It belongs to the UPF0182 family.

The protein localises to the cell membrane. This chain is UPF0182 protein GM21_2279, found in Geobacter sp. (strain M21).